The following is a 348-amino-acid chain: Large ribosomal subunit protein uL3m (348 aa).

Residues 1–40 constitute a mitochondrion transit peptide; sequence MPGWRLLAQAGARVLGCGARGLGADPGLERRKNILFFVRN.

It belongs to the universal ribosomal protein uL3 family. As to quaternary structure, component of the mitochondrial ribosome large subunit (39S) which comprises a 16S rRNA and about 50 distinct proteins.

The protein resides in the mitochondrion. This chain is Large ribosomal subunit protein uL3m (Mrpl3), found in Mus musculus (Mouse).